A 311-amino-acid polypeptide reads, in one-letter code: 4-hydroxy-3-methylbut-2-enyl diphosphate reductase (311 aa).

Residue Cys12 participates in [4Fe-4S] cluster binding. Residues His41 and His74 each contribute to the (2E)-4-hydroxy-3-methylbut-2-enyl diphosphate site. Dimethylallyl diphosphate-binding residues include His41 and His74. Residues His41 and His74 each coordinate isopentenyl diphosphate. Cys96 contributes to the [4Fe-4S] cluster binding site. (2E)-4-hydroxy-3-methylbut-2-enyl diphosphate is bound at residue His124. Residue His124 coordinates dimethylallyl diphosphate. His124 is a binding site for isopentenyl diphosphate. Glu126 (proton donor) is an active-site residue. Thr167 contributes to the (2E)-4-hydroxy-3-methylbut-2-enyl diphosphate binding site. Cys197 contacts [4Fe-4S] cluster. Residues Ser225, Ser226, Asn227, and Ser269 each contribute to the (2E)-4-hydroxy-3-methylbut-2-enyl diphosphate site. Ser225, Ser226, Asn227, and Ser269 together coordinate dimethylallyl diphosphate. Isopentenyl diphosphate is bound by residues Ser225, Ser226, Asn227, and Ser269.

Belongs to the IspH family. It depends on [4Fe-4S] cluster as a cofactor.

It catalyses the reaction isopentenyl diphosphate + 2 oxidized [2Fe-2S]-[ferredoxin] + H2O = (2E)-4-hydroxy-3-methylbut-2-enyl diphosphate + 2 reduced [2Fe-2S]-[ferredoxin] + 2 H(+). It carries out the reaction dimethylallyl diphosphate + 2 oxidized [2Fe-2S]-[ferredoxin] + H2O = (2E)-4-hydroxy-3-methylbut-2-enyl diphosphate + 2 reduced [2Fe-2S]-[ferredoxin] + 2 H(+). The protein operates within isoprenoid biosynthesis; dimethylallyl diphosphate biosynthesis; dimethylallyl diphosphate from (2E)-4-hydroxy-3-methylbutenyl diphosphate: step 1/1. Its pathway is isoprenoid biosynthesis; isopentenyl diphosphate biosynthesis via DXP pathway; isopentenyl diphosphate from 1-deoxy-D-xylulose 5-phosphate: step 6/6. Functionally, catalyzes the conversion of 1-hydroxy-2-methyl-2-(E)-butenyl 4-diphosphate (HMBPP) into a mixture of isopentenyl diphosphate (IPP) and dimethylallyl diphosphate (DMAPP). Acts in the terminal step of the DOXP/MEP pathway for isoprenoid precursor biosynthesis. The polypeptide is 4-hydroxy-3-methylbut-2-enyl diphosphate reductase (Aeromonas salmonicida (strain A449)).